A 239-amino-acid chain; its full sequence is tRNA (guanine-N(7)-)-methyltransferase (239 aa).

Positions 69, 94, 121, and 144 each coordinate S-adenosyl-L-methionine. Aspartate 144 is an active-site residue. Substrate is bound at residue lysine 148. The tract at residues 150-155 (RHNKRR) is interaction with RNA. Substrate-binding positions include aspartate 180 and 217-220 (TKFE).

The protein belongs to the class I-like SAM-binding methyltransferase superfamily. TrmB family. In terms of assembly, monomer.

It catalyses the reaction guanosine(46) in tRNA + S-adenosyl-L-methionine = N(7)-methylguanosine(46) in tRNA + S-adenosyl-L-homocysteine. The protein operates within tRNA modification; N(7)-methylguanine-tRNA biosynthesis. Its function is as follows. Catalyzes the formation of N(7)-methylguanine at position 46 (m7G46) in tRNA. The chain is tRNA (guanine-N(7)-)-methyltransferase from Pectobacterium atrosepticum (strain SCRI 1043 / ATCC BAA-672) (Erwinia carotovora subsp. atroseptica).